The sequence spans 306 residues: sn-1-specific diacylglycerol lipase ABHD11 (306 aa).

The tract at residues glycine 19–glutamate 40 is disordered. Low complexity predominate over residues alanine 23–serine 33. Residue lysine 78 is modified to N6-succinyllysine. Residues serine 132, aspartate 228, and histidine 287 each act as charge relay system in the active site.

Belongs to the AB hydrolase superfamily. Interacts with OGDH and DLST; this interaction maintains the functional lipoylation of the 2-oxoglutarate dehydrogenase complex. Phosphorylated. Ubiquitously expressed. Highly expressed in small intestine, prostate and thyroid, while aorta and colon tissues exhibit weak expression levels.

It localises to the mitochondrion. The protein localises to the mitochondrion matrix. It catalyses the reaction 1-octadecanoyl-2-(5Z,8Z,11Z,14Z-eicosatetraenoyl)-sn-glycerol + H2O = 2-(5Z,8Z,11Z,14Z-eicosatetraenoyl)-glycerol + octadecanoate + H(+). The catalysed reaction is a 1,2-diacyl-sn-glycerol + H2O = a 2-acylglycerol + a fatty acid + H(+). It carries out the reaction a 1,3-diacyl-sn-glycerol + H2O = a 1-acyl-sn-glycerol + a fatty acid + H(+). The enzyme catalyses 1-octadecanoyl-2-(9Z-octadecenoyl)-sn-glycerol + H2O = 2-(9Z-octadecenoyl)-glycerol + octadecanoate + H(+). It catalyses the reaction 1-octadecanoyl-2-(4Z,7Z,10Z,13Z,16Z,19Z-docosahexaenoyl)-sn-glycerol + H2O = 2-(4Z,7Z,10Z,13Z,16Z,19Z-docosahexaenoyl)-glycerol + octadecanoate + H(+). The catalysed reaction is 1,2-didecanoylglycerol + H2O = decanoylglycerol + decanoate + H(+). Catalyzes the hydrolysis of diacylglycerol in vitro and may function as a key regulator in lipid metabolism, namely by regulating the intracellular levels of diacylglycerol. 1,2-diacyl-sn-glycerols are the preferred substrate over 1,3-diacyl-sn-glycerols. The enzyme hydrolyzes stearate in preference to palmitate from the sn-1 position of 1,2-diacyl-sn-glycerols. Maintains the functional lipoylation of the 2-oxoglutarate dehydrogenase complex (OGDHc) through its interaction with the OGDHc by preventing the formation of lipoyl adducts. In addition, is also required for the expansion and differentiation of embryonic stem cells (ESCs). In Homo sapiens (Human), this protein is sn-1-specific diacylglycerol lipase ABHD11.